The following is a 461-amino-acid chain: Carbamoyl phosphate synthase arginine-specific small chain (461 aa).

Residues 240 to 427 enclose the Glutamine amidotransferase type-1 domain; it reads HVALIDCGVK…LENVQMYKDN (188 aa). The Nucleophile role is filled by Cys-316. Catalysis depends on residues His-400 and Glu-402.

It belongs to the CarA family. Heterodimer composed of 2 chains; the small (or glutamine) chain promotes the hydrolysis of glutamine to ammonia, which is used by the large (or ammonia) chain to synthesize carbamoyl phosphate.

The protein localises to the cytoplasm. The enzyme catalyses hydrogencarbonate + L-glutamine + 2 ATP + H2O = carbamoyl phosphate + L-glutamate + 2 ADP + phosphate + 2 H(+). It carries out the reaction L-glutamine + H2O = L-glutamate + NH4(+). It participates in amino-acid biosynthesis; L-arginine biosynthesis; carbamoyl phosphate from bicarbonate: step 1/1. Small subunit of the arginine-specific carbamoyl phosphate synthase (CPSase). CPSase catalyzes the formation of carbamoyl phosphate from the ammonia moiety of glutamine, carbonate, and phosphate donated by ATP, constituting the first step of 2 biosynthetic pathways, one leading to arginine and/or urea and the other to pyrimidine nucleotides. The small subunit (glutamine amidotransferase) binds and cleaves glutamine to supply the large subunit with the substrate ammonia. The chain is Carbamoyl phosphate synthase arginine-specific small chain (CPA1) from Chaetomium globosum (strain ATCC 6205 / CBS 148.51 / DSM 1962 / NBRC 6347 / NRRL 1970) (Soil fungus).